The primary structure comprises 555 residues: Glutamate--tRNA ligase (555 aa).

Residues Pro100–His110 carry the 'HIGH' region motif.

This sequence belongs to the class-I aminoacyl-tRNA synthetase family. Glutamate--tRNA ligase type 2 subfamily.

The protein resides in the cytoplasm. It carries out the reaction tRNA(Glu) + L-glutamate + ATP = L-glutamyl-tRNA(Glu) + AMP + diphosphate. In terms of biological role, catalyzes the attachment of glutamate to tRNA(Glu) in a two-step reaction: glutamate is first activated by ATP to form Glu-AMP and then transferred to the acceptor end of tRNA(Glu). The protein is Glutamate--tRNA ligase of Methanococcus maripaludis (strain C7 / ATCC BAA-1331).